The primary structure comprises 365 residues: Phospho-N-acetylmuramoyl-pentapeptide-transferase (365 aa).

10 consecutive transmembrane segments (helical) span residues 22–42 (YISV…LALG), 74–94 (TMGG…WGDL), 95–115 (TSIY…IGFF), 133–153 (YKFA…FYLL), 168–188 (SLYI…IING), 201–221 (GLAI…AYIE), 240–260 (LAEV…FLWF), 267–287 (VFMG…IAVM), 292–312 (LIFF…MLQV), and 342–362 (KVVI…LAAI).

The protein belongs to the glycosyltransferase 4 family. MraY subfamily. The cofactor is Mg(2+).

It is found in the cell inner membrane. The enzyme catalyses UDP-N-acetyl-alpha-D-muramoyl-L-alanyl-gamma-D-glutamyl-meso-2,6-diaminopimeloyl-D-alanyl-D-alanine + di-trans,octa-cis-undecaprenyl phosphate = di-trans,octa-cis-undecaprenyl diphospho-N-acetyl-alpha-D-muramoyl-L-alanyl-D-glutamyl-meso-2,6-diaminopimeloyl-D-alanyl-D-alanine + UMP. It functions in the pathway cell wall biogenesis; peptidoglycan biosynthesis. Its function is as follows. Catalyzes the initial step of the lipid cycle reactions in the biosynthesis of the cell wall peptidoglycan: transfers peptidoglycan precursor phospho-MurNAc-pentapeptide from UDP-MurNAc-pentapeptide onto the lipid carrier undecaprenyl phosphate, yielding undecaprenyl-pyrophosphoryl-MurNAc-pentapeptide, known as lipid I. This is Phospho-N-acetylmuramoyl-pentapeptide-transferase from Francisella tularensis subsp. tularensis (strain FSC 198).